The sequence spans 327 residues: Tetraacyldisaccharide 4'-kinase (327 aa).

52 to 59 provides a ligand contact to ATP; the sequence is TLGGAGKT.

It belongs to the LpxK family.

It catalyses the reaction a lipid A disaccharide + ATP = a lipid IVA + ADP + H(+). It participates in glycolipid biosynthesis; lipid IV(A) biosynthesis; lipid IV(A) from (3R)-3-hydroxytetradecanoyl-[acyl-carrier-protein] and UDP-N-acetyl-alpha-D-glucosamine: step 6/6. Functionally, transfers the gamma-phosphate of ATP to the 4'-position of a tetraacyldisaccharide 1-phosphate intermediate (termed DS-1-P) to form tetraacyldisaccharide 1,4'-bis-phosphate (lipid IVA). The sequence is that of Tetraacyldisaccharide 4'-kinase from Methylorubrum populi (strain ATCC BAA-705 / NCIMB 13946 / BJ001) (Methylobacterium populi).